The sequence spans 277 residues: Large ribosomal subunit protein uL2 (277 aa).

Disordered stretches follow at residues 37-58 and 222-277; these read LHSK…GGGH and GVAM…NRRR. Over residues 268-277 the composition is skewed to basic residues; it reads VRRRKQNRRR.

Belongs to the universal ribosomal protein uL2 family. Part of the 50S ribosomal subunit. Forms a bridge to the 30S subunit in the 70S ribosome.

One of the primary rRNA binding proteins. Required for association of the 30S and 50S subunits to form the 70S ribosome, for tRNA binding and peptide bond formation. It has been suggested to have peptidyltransferase activity; this is somewhat controversial. Makes several contacts with the 16S rRNA in the 70S ribosome. The protein is Large ribosomal subunit protein uL2 of Parafrankia sp. (strain EAN1pec).